The sequence spans 134 residues: uncharacterized protein (134 aa).

This sequence to E.coli YbcV and YdfO.

This is an uncharacterized protein from Escherichia coli (strain K12).